The chain runs to 234 residues: MPTPHIEAQKGEIADKILLPGDPLRAKFIAENFLEDAVQFNQVRGMLGFTGTYKGHRVSVMGTGMGIPSISIYANELITEYGVKRLIRVGTAGSVNEDVHIRDLVIGQAAATTSAIIRNDFPDFDFPQIADFDLLDKAYHIAKDLGITTHVGNILSSDLFYGGPDAVKVGKLGVKAVEMEAAGLYYLGAKYKVQTLGIMTISDHILTGESTTSEERQLTFTDMMKVGLETLISE.

Residue histidine 5 participates in a purine D-ribonucleoside binding. Phosphate-binding positions include glycine 21, arginine 25, arginine 44, and arginine 88 to threonine 91. A purine D-ribonucleoside contacts are provided by residues glutamate 178 to glutamate 180 and serine 202 to aspartate 203. The active-site Proton donor is the aspartate 203.

The protein belongs to the PNP/UDP phosphorylase family. As to quaternary structure, homohexamer; trimer of homodimers.

It catalyses the reaction a purine D-ribonucleoside + phosphate = a purine nucleobase + alpha-D-ribose 1-phosphate. The catalysed reaction is a purine 2'-deoxy-D-ribonucleoside + phosphate = a purine nucleobase + 2-deoxy-alpha-D-ribose 1-phosphate. Its function is as follows. Catalyzes the reversible phosphorolytic breakdown of the N-glycosidic bond in the beta-(deoxy)ribonucleoside molecules, with the formation of the corresponding free purine bases and pentose-1-phosphate. This is Purine nucleoside phosphorylase DeoD-type from Lactococcus lactis subsp. lactis (strain IL1403) (Streptococcus lactis).